A 507-amino-acid chain; its full sequence is Putative F-box/LRR-repeat protein At4g00320 (507 aa).

The 49-residue stretch at 12 to 60 (RDGISGLPDAMICHILSFLPTKVAASTTVLAKRWKPLLAFMPNLDFDES) folds into the F-box domain. 5 LRR repeats span residues 135–163 (RGFGSNSTFYPLPSEIFVSKTLVRLKIQF), 187–212 (YVKMDTRMLQKLLSGCHTLEELLLMN), 214–240 (IWKESSEPEPCFVSVSVRTLKILKFSR), 317–348 (ILYLTEDTLKVLGCCRETMPVFENLIHLTIRT), and 349–374 (GVHIGWKSLPHLLKNCPNLQTLVFEG).

This is Putative F-box/LRR-repeat protein At4g00320 from Arabidopsis thaliana (Mouse-ear cress).